The chain runs to 303 residues: Probable 5-dehydro-4-deoxyglucarate dehydratase (303 aa).

The protein belongs to the DapA family.

The enzyme catalyses 5-dehydro-4-deoxy-D-glucarate + H(+) = 2,5-dioxopentanoate + CO2 + H2O. It participates in carbohydrate acid metabolism; D-glucarate degradation; 2,5-dioxopentanoate from D-glucarate: step 2/2. In Pseudomonas syringae pv. tomato (strain ATCC BAA-871 / DC3000), this protein is Probable 5-dehydro-4-deoxyglucarate dehydratase.